Reading from the N-terminus, the 644-residue chain is Chaperone protein DnaK (644 aa).

Thr199 is modified (phosphothreonine; by autocatalysis). A disordered region spans residues Tyr603–Lys644. Residues Glu609–Thr623 show a composition bias toward polar residues. Acidic residues predominate over residues Gly629–Lys644.

Belongs to the heat shock protein 70 family.

In terms of biological role, acts as a chaperone. This Legionella pneumophila (strain Corby) protein is Chaperone protein DnaK.